We begin with the raw amino-acid sequence, 309 residues long: NADH-cytochrome b5 reductase 1 (309 aa).

The helical transmembrane segment at 30–50 (FVPYAVAVTAILAGLKLFTGG) threads the bilayer. Residues 60-165 (TEFQEFVLKE…RGPKGAMVYT (106 aa)) form the FAD-binding FR-type domain. Residues 145-160 (TTLKIGDTMKVRGPKG) and 171-208 (HIGMIAGGTGITPMLQIIKAVIRNRPRNGGNDTTKLDL) each bind FAD.

This sequence belongs to the flavoprotein pyridine nucleotide cytochrome reductase family. As to quaternary structure, monomer. Component of the 2-(3-amino-3-carboxypropyl)histidine synthase complex composed of dph1, dph2, dph3 and a NADH-dependent reductase, predominantly cbr1. The cofactor is FAD.

The protein localises to the mitochondrion outer membrane. It catalyses the reaction 2 Fe(III)-[cytochrome b5] + NADH = 2 Fe(II)-[cytochrome b5] + NAD(+) + H(+). The enzyme catalyses 2 Fe(3+)-[Dph3] + NADH = 2 Fe(2+)-[Dph3] + NAD(+) + H(+). It functions in the pathway protein modification; peptidyl-diphthamide biosynthesis. In terms of biological role, NADH-dependent reductase for dph3 and cytochrome b5. Required for the first step of diphthamide biosynthesis, a post-translational modification of histidine which occurs in elongation factor 2. Dph1 and dph2 transfer a 3-amino-3-carboxypropyl (ACP) group from S-adenosyl-L-methionine (SAM) to a histidine residue, the reaction is assisted by a reduction system comprising dph3 and a NADH-dependent reductase, predominantly cbr1. By reducing dph3, also involved in the formation of the tRNA wobble base modification mcm5s 2U (5-methoxycarbonylmethyl-2-thiouridine), mediated by the elongator complex. The cytochrome b5/NADH cytochrome b5 reductase electron transfer system supports the catalytic activity of several sterol biosynthetic enzymes. The protein is NADH-cytochrome b5 reductase 1 (cbr1) of Aspergillus fumigatus (strain ATCC MYA-4609 / CBS 101355 / FGSC A1100 / Af293) (Neosartorya fumigata).